The primary structure comprises 523 residues: 2-isopropylmalate synthase (523 aa).

The Pyruvate carboxyltransferase domain maps to 5–267 (VIIFDTTLRD…HTNINHHEIW (263 aa)). D14, H202, H204, and N238 together coordinate Mn(2+). The interval 392–523 (RLDYFSVQSG…HNKENNKEIV (132 aa)) is regulatory domain.

Belongs to the alpha-IPM synthase/homocitrate synthase family. LeuA type 1 subfamily. In terms of assembly, homodimer. Mn(2+) serves as cofactor.

It is found in the cytoplasm. It carries out the reaction 3-methyl-2-oxobutanoate + acetyl-CoA + H2O = (2S)-2-isopropylmalate + CoA + H(+). It participates in amino-acid biosynthesis; L-leucine biosynthesis; L-leucine from 3-methyl-2-oxobutanoate: step 1/4. Functionally, catalyzes the condensation of the acetyl group of acetyl-CoA with 3-methyl-2-oxobutanoate (2-ketoisovalerate) to form 3-carboxy-3-hydroxy-4-methylpentanoate (2-isopropylmalate). In Salmonella arizonae (strain ATCC BAA-731 / CDC346-86 / RSK2980), this protein is 2-isopropylmalate synthase.